We begin with the raw amino-acid sequence, 257 residues long: Hydroxyacylglutathione hydrolase (257 aa).

Zn(2+) is bound by residues His-54, His-56, Asp-58, His-59, His-113, Asp-137, and His-175.

It belongs to the metallo-beta-lactamase superfamily. Glyoxalase II family. In terms of assembly, monomer. Zn(2+) serves as cofactor.

It catalyses the reaction an S-(2-hydroxyacyl)glutathione + H2O = a 2-hydroxy carboxylate + glutathione + H(+). Its pathway is secondary metabolite metabolism; methylglyoxal degradation; (R)-lactate from methylglyoxal: step 2/2. Functionally, thiolesterase that catalyzes the hydrolysis of S-D-lactoyl-glutathione to form glutathione and D-lactic acid. The sequence is that of Hydroxyacylglutathione hydrolase from Trichormus variabilis (strain ATCC 29413 / PCC 7937) (Anabaena variabilis).